The following is a 230-amino-acid chain: uncharacterized protein (230 aa).

The chain crosses the membrane as a helical span at residues 7–23 (LFTASILSLGYLVFICG). The interval 27–230 (KPKPTASTES…VKTEGTLKKN (204 aa)) is disordered. Low complexity predominate over residues 50–59 (AVPQKPAAPA). Positions 60–83 (AEEKAPVDPKDPKSKDVDEAKKPD) are enriched in basic and acidic residues. Residues 101–112 (KKSKKSEKSKKK) are compositionally biased toward basic residues. Residues 113–173 (KTEEKVMSED…KEKSKDETVP (61 aa)) show a composition bias toward basic and acidic residues. Residues 199–210 (ETDEFPTIDEDA) show a composition bias toward acidic residues. Over residues 211–230 (EKTKKTEKKDVKTEGTLKKN) the composition is skewed to basic and acidic residues.

The protein resides in the membrane. This is an uncharacterized protein from Caenorhabditis elegans.